We begin with the raw amino-acid sequence, 358 residues long: Probable (S)-tetrahydroprotoberberine N-methyltransferase 2 (358 aa).

The S-adenosyl-L-methionine site is built by serine 98, glycine 136, asparagine 160, glutamine 164, aspartate 186, valine 187, and isoleucine 202. Cysteine 333 is an active-site residue.

Belongs to the CFA/CMAS family. In terms of assembly, homodimer.

The protein resides in the cytoplasm. The enzyme catalyses (S)-stylopine + S-adenosyl-L-methionine = (S)-cis-N-methylstylopine + S-adenosyl-L-homocysteine. It catalyses the reaction (S)-tetrahydropalmatine + S-adenosyl-L-methionine = (S)-cis-N-methyltetrahydropalmatine + S-adenosyl-L-homocysteine. The protein operates within alkaloid biosynthesis. N-methyltransferase with a strict substrate specificity for (R,S)-tetrahydropalmatine or (R,S)-stylopine. This chain is Probable (S)-tetrahydroprotoberberine N-methyltransferase 2, found in Papaver bracteatum (Great scarlet poppy).